The following is a 672-amino-acid chain: PHD finger protein MALE STERILITY 1 (672 aa).

A PHD-type zinc finger spans residues Arg614–His664.

In terms of tissue distribution, in closed flower buds, especially in anthers.

It localises to the nucleus. In terms of biological role, transcriptional activator required for anther and post-meiotic pollen development and maturation. Seems to regulate inflorescence branching and floral development. May control tapetal development by directly regulating tapetal programmed cell death (PCD) and breakdown. Implicated in pollen cytosolic components and wall development (e.g. exine and intine formation). In Arabidopsis thaliana (Mouse-ear cress), this protein is PHD finger protein MALE STERILITY 1 (MS1).